A 730-amino-acid chain; its full sequence is uncharacterized protein (730 aa).

A phosphoserine mark is found at S82 and S89. 2 disordered regions span residues S82–Y114 and N447–E468. Polar residues predominate over residues S89–N98. Over residues N449–N460 the composition is skewed to low complexity. Residues S483 and S651 each carry the phosphoserine modification.

This is an uncharacterized protein from Saccharomyces cerevisiae (strain ATCC 204508 / S288c) (Baker's yeast).